The sequence spans 318 residues: NADH-ubiquinone oxidoreductase chain 1 (318 aa).

Helical transmembrane passes span 2–22 (FMIN…FLTL), 68–88 (ISMF…MWTP), 100–120 (LGIL…LWSG), 146–166 (LAII…PTLI), 171–191 (HIWL…STLA), 222–242 (LFFL…TILF), 253–273 (ELYT…FLWV), and 293–313 (FLPL…ITAG).

Belongs to the complex I subunit 1 family. Core subunit of respiratory chain NADH dehydrogenase (Complex I) which is composed of 45 different subunits.

The protein localises to the mitochondrion inner membrane. The catalysed reaction is a ubiquinone + NADH + 5 H(+)(in) = a ubiquinol + NAD(+) + 4 H(+)(out). In terms of biological role, core subunit of the mitochondrial membrane respiratory chain NADH dehydrogenase (Complex I) which catalyzes electron transfer from NADH through the respiratory chain, using ubiquinone as an electron acceptor. Essential for the catalytic activity and assembly of complex I. This is NADH-ubiquinone oxidoreductase chain 1 (MT-ND1) from Hipposideros armiger terasensis (Formosan leaf-nosed bat).